Here is a 473-residue protein sequence, read N- to C-terminus: mRNA export factor ICP27 homolog (473 aa).

2 disordered regions span residues 57 to 81 (QELL…NSIY) and 123 to 143 (QTKR…NFPM). Positions 362, 438, 442, and 447 each coordinate Zn(2+). A CHC2-type zinc finger spans residues 362-447 (CKYGTEKRSM…HTRRCSDPAC (86 aa)).

Belongs to the HHV-1 ICP27 protein family. In terms of assembly, associates in a complex with RNA, and host export factors NXF1/TAP and ALYREF; these interactions allow nuclear export of viral transcripts.

The protein resides in the host cytoplasm. It localises to the host nucleus. Multifunctional regulator of the expression of viral genes that mediates nuclear export of viral intronless mRNAs. This immediate early (EI) protein promotes the nuclear export of viral intronless mRNAs by interacting with mRNAs and host NXF1/TAP. The sequence is that of mRNA export factor ICP27 homolog from Gallus gallus (Chicken).